The chain runs to 177 residues: Ribosome maturation factor RimM (177 aa).

In terms of domain architecture, PRC barrel spans 101–174 (EGEFHLLDLV…WLLLTPPPGL (74 aa)).

Belongs to the RimM family. As to quaternary structure, binds ribosomal protein uS19.

It localises to the cytoplasm. Functionally, an accessory protein needed during the final step in the assembly of 30S ribosomal subunit, possibly for assembly of the head region. Essential for efficient processing of 16S rRNA. May be needed both before and after RbfA during the maturation of 16S rRNA. It has affinity for free ribosomal 30S subunits but not for 70S ribosomes. This Synechococcus sp. (strain CC9605) protein is Ribosome maturation factor RimM.